The chain runs to 753 residues: MLPRVNKRSNCIAKKTSNRLISAVSLAIASLCISQSALADGMPKTNTFWWPEQLNLQPLRQNDAKSNPLGGDFNYADAFKTLNLANVKSDIKALLTSSQDWWPADYGHYGPFFVRMAWHSTGTYRMSDGRGGGAGGQQRFEPLNSWPDNVSLDKARRLLWPIKQKYGRSLSWADLMVLTGNVAMESMGFTIYGFAGGREDDFEPDLVYWGPEKKWLGGNERYSGERKLEEPLAAVQMGLIYVNPEGPNGNHDPISAAADIRDVFARMAMNDEETVALIAGGHTFGKAHGAHKPDECLDPAPAGATIEEQGLGWKNKCGKGNAEDTITSGLEGAWSVSPTQWTMQYLDNLFGFEWVETQSPAGATQWIPKDNAGANLVPDAHVKSKRHAPIMFTTDLALKEDPQYRKIAERFHANPKEFELAFSKAWFKLTHRDMGPRARYVGDESPTDDFLWQDPIPSVDYSLIDKRDIQHLKTKLLDGDVTPAQLVKTAWAAAASFRATDMRGGVNGARIQLAPQKNWEVNNPDELNTVLMFLNKVKKDFNDGQSGNKQVSLADLIVLGGAAAIEHAASKNDFDVEVPFIPGRSDATQAQTEVESFAVLEPKADGFRNYYAQGNTLSPVEMLVDKANTLDLSVPEMSVLVAGLRVMNINADGSDRGVLTDNPGTLNNDFFVNLLDMSTRWEKAKDQQDLYLGIDRKSNKQRWSASSVDLIFGSNSELRAVAEVYASDDAHQQFVDDFVNAWTKVMTLDRFDL.

Residues 1–39 (MLPRVNKRSNCIAKKTSNRLISAVSLAIASLCISQSALA) form the signal peptide. The segment at residues 118 to 241 (WHSTGTYRMS…LAAVQMGLIY (124 aa)) is a cross-link (tryptophyl-tyrosyl-methioninium (Trp-Tyr) (with M-267)). Histidine 119 (proton acceptor) is an active-site residue. The tryptophyl-tyrosyl-methioninium (Tyr-Met) (with W-118) cross-link spans 241–267 (YVNPEGPNGNHDPISAAADIRDVFARM). Residue histidine 282 coordinates heme b.

The protein belongs to the peroxidase family. Peroxidase/catalase subfamily. As to quaternary structure, homodimer or homotetramer. Requires heme b as cofactor. Formation of the three residue Trp-Tyr-Met cross-link is important for the catalase, but not the peroxidase activity of the enzyme.

It catalyses the reaction H2O2 + AH2 = A + 2 H2O. The catalysed reaction is 2 H2O2 = O2 + 2 H2O. Bifunctional enzyme with both catalase and broad-spectrum peroxidase activity. The protein is Catalase-peroxidase of Pseudoalteromonas atlantica (strain T6c / ATCC BAA-1087).